We begin with the raw amino-acid sequence, 1155 residues long: uncharacterized protein (1155 aa).

The first 19 residues, 1–19, serve as a signal peptide directing secretion; that stretch reads MKKNIFITSLLILLLLLSS. Residue Cys20 is the site of N-palmitoyl cysteine attachment. Cys20 is lipidated: S-diacylglycerol cysteine. A run of 4 helical transmembrane segments spans residues 289 to 309, 395 to 415, 424 to 444, and 459 to 479; these read ISVS…FLIG, LGFI…FLIF, ALIT…FMLF, and ISYA…SMII.

It belongs to the TrbL/VirB6 family.

Its subcellular location is the cell membrane. This is an uncharacterized protein from Rickettsia prowazekii (strain Madrid E).